Here is a 711-residue protein sequence, read N- to C-terminus: Hepatocyte growth factor-like protein (711 aa).

The first 18 residues, 1–18 (MGWLPLLLLLTQCLGVPG), serve as a signal peptide directing secretion. A PAN domain is found at 21–105 (SPLNDFQVLR…GRCDLFQKKD (85 aa)). Cystine bridges form between Cys-56/Cys-78, Cys-60/Cys-66, Cys-110/Cys-186, Cys-131/Cys-169, Cys-157/Cys-181, Cys-191/Cys-268, Cys-194/Cys-324, Cys-212/Cys-251, Cys-240/Cys-263, Cys-283/Cys-361, Cys-304/Cys-343, Cys-332/Cys-355, Cys-370/Cys-448, Cys-391/Cys-431, Cys-419/Cys-443, Cys-468/Cys-588, Cys-507/Cys-523, Cys-602/Cys-667, Cys-632/Cys-646, and Cys-657/Cys-685. N-linked (GlcNAc...) asparagine glycosylation is present at Asn-72. Kringle domains lie at 110 to 186 (CIMN…IKSC), 191 to 268 (CVWC…LPRC), 283 to 361 (CFRG…IRRC), and 370 to 448 (CYHG…LRRC). The N-linked (GlcNAc...) asparagine glycan is linked to Asn-296. The Peptidase S1 domain occupies 484 to 709 (VVGGHPGNSP…FVDWIHKVMR (226 aa)). N-linked (GlcNAc...) asparagine glycosylation occurs at Asn-615.

This sequence belongs to the peptidase S1 family. Plasminogen subfamily. Dimer of an alpha chain and a beta chain linked by a disulfide bond. Interacts (via beta chain) with MST1R (via SEMA domain). In terms of processing, cleaved after Arg-483, probably by HPN/Hepsin, to yield the active form consisting of two disulfide-linked chains.

The protein resides in the secreted. The sequence is that of Hepatocyte growth factor-like protein (MST1) from Homo sapiens (Human).